The primary structure comprises 379 residues: Diaminopimelate decarboxylase (379 aa).

Position 48 is an N6-(pyridoxal phosphate)lysine (Lys48). Pyridoxal 5'-phosphate is bound by residues Gly214 and 242–245 (EPGR). Substrate contacts are provided by Arg245, Arg280, and Tyr284. Cys309 functions as the Proton donor in the catalytic mechanism. The substrate site is built by Glu310 and Tyr338. Position 338 (Tyr338) interacts with pyridoxal 5'-phosphate.

This sequence belongs to the Orn/Lys/Arg decarboxylase class-II family. LysA subfamily. Homodimer. It depends on pyridoxal 5'-phosphate as a cofactor.

It catalyses the reaction meso-2,6-diaminopimelate + H(+) = L-lysine + CO2. The protein operates within amino-acid biosynthesis; L-lysine biosynthesis via DAP pathway; L-lysine from DL-2,6-diaminopimelate: step 1/1. In terms of biological role, specifically catalyzes the decarboxylation of meso-diaminopimelate (meso-DAP) to L-lysine. This is Diaminopimelate decarboxylase from Deinococcus radiodurans (strain ATCC 13939 / DSM 20539 / JCM 16871 / CCUG 27074 / LMG 4051 / NBRC 15346 / NCIMB 9279 / VKM B-1422 / R1).